We begin with the raw amino-acid sequence, 557 residues long: UvrABC system protein C (557 aa).

The GIY-YIG domain occupies 14–89 (EEPGVYIFKN…IKKYRPKYNV (76 aa)). The 36-residue stretch at 194–229 (EEVFDYLKEKMETHSKMLDFENAAKYRDLLLNLSNV) folds into the UVR domain.

Belongs to the UvrC family. Interacts with UvrB in an incision complex.

The protein localises to the cytoplasm. Its function is as follows. The UvrABC repair system catalyzes the recognition and processing of DNA lesions. UvrC both incises the 5' and 3' sides of the lesion. The N-terminal half is responsible for the 3' incision and the C-terminal half is responsible for the 5' incision. The polypeptide is UvrABC system protein C (Thermotoga sp. (strain RQ2)).